A 347-amino-acid polypeptide reads, in one-letter code: Dual specificity mitogen-activated protein kinase kinase 3 (347 aa).

Met1 bears the N-acetylmethionine mark. Residues 1–11 are compositionally biased toward pro residues; that stretch reads MESPAASPPAS. A disordered region spans residues 1 to 45; it reads MESPAASPPASLPQTKGKSKRKKDLRISCVSKPPVSNPTPPRNLD. At Ser3 the chain carries Phosphoserine. Residues 64–325 form the Protein kinase domain; that stretch reads LVTISELGRG…YLELMEHPFF (262 aa). ATP-binding positions include 70-78 and Lys93; that span reads LGRGAYGVV. The active-site Proton acceptor is the Asp190. Ser218 is modified (phosphoserine). Residue Thr222 is modified to Phosphothreonine.

This sequence belongs to the protein kinase superfamily. STE Ser/Thr protein kinase family. MAP kinase kinase subfamily. In terms of assembly, component of a signaling complex containing at least AKAP13, PKN1, MAPK14, ZAK and MAP2K3. Within this complex, AKAP13 interacts directly with PKN1, which in turn recruits MAPK14, MAP2K3 and ZAK. Binds to DYRK1B/MIRK and increases its kinase activity. Part of a complex with MAP3K3, RAC1 and CCM2. Interacts with ARRB1. Autophosphorylated. Phosphorylation on Ser-218 and Thr-222 by MAP kinase kinase kinases positively regulates the kinase activity. Phosphorylated by TAOK2.

It carries out the reaction L-seryl-[protein] + ATP = O-phospho-L-seryl-[protein] + ADP + H(+). The enzyme catalyses L-threonyl-[protein] + ATP = O-phospho-L-threonyl-[protein] + ADP + H(+). It catalyses the reaction L-tyrosyl-[protein] + ATP = O-phospho-L-tyrosyl-[protein] + ADP + H(+). With respect to regulation, activated by dual phosphorylation on Ser-218 and Thr-222. Dual specificity kinase. Is activated by cytokines and environmental stress in vivo. Catalyzes the concomitant phosphorylation of a threonine and a tyrosine residue in the MAP kinase p38. Part of a signaling cascade that begins with the activation of the adrenergic receptor ADRA1B and leads to the activation of MAPK14. This chain is Dual specificity mitogen-activated protein kinase kinase 3 (Map2k3), found in Mus musculus (Mouse).